Reading from the N-terminus, the 73-residue chain is DNA-binding protein S1FA3 (73 aa).

Positions 47-52 (PPRKKK) match the Nuclear localization signal motif. The segment covering 47–63 (PPRKKKPVSKKKMKKEK) has biased composition (basic residues). A disordered region spans residues 47–73 (PPRKKKPVSKKKMKKEKMKQGVQVPGE).

The protein belongs to the S1FA transcription factor family.

The protein resides in the nucleus. Its function is as follows. DNA-binding protein that specifically recognizes a negative element (S1F) within the RPS1 promoter. The protein is DNA-binding protein S1FA3 (S1FA3) of Arabidopsis thaliana (Mouse-ear cress).